The chain runs to 125 residues: MVRESVLVMVGGALGSLARYWVGLGISQWAGAPPFLFGTLLVNLVGSFMLGGLFAWSVALRIDPALLLLAGTGFCGGFTTFSALSIECLVLLQKGDYPTAMGYLLGSLLGGLAAGWAGYLAAKAL.

4 helical membrane-spanning segments follow: residues 6 to 26 (VLVM…GLGI), 35 to 55 (FLFG…GLFA), 66 to 86 (LLLL…ALSI), and 100 to 120 (AMGY…AGYL). G76 and T79 together coordinate Na(+).

It belongs to the fluoride channel Fluc/FEX (TC 1.A.43) family.

It is found in the cell inner membrane. The enzyme catalyses fluoride(in) = fluoride(out). Na(+) is not transported, but it plays an essential structural role and its presence is essential for fluoride channel function. Functionally, fluoride-specific ion channel. Important for reducing fluoride concentration in the cell, thus reducing its toxicity. This Gloeobacter violaceus (strain ATCC 29082 / PCC 7421) protein is Fluoride-specific ion channel FluC.